We begin with the raw amino-acid sequence, 324 residues long: Glutathione synthetase (324 aa).

In terms of domain architecture, ATP-grasp spans 124-309 (KLAIAQFREF…VAGMFIDALE (186 aa)). 150–206 (HAEQGDVIFKPLDGMGGAGIFRVGADGMNLGSVIETLTHNGTRTVMAQQYIPAIRDG) serves as a coordination point for ATP. Mg(2+) is bound by residues Glu280 and Asn282.

The protein belongs to the prokaryotic GSH synthase family. Requires Mg(2+) as cofactor. It depends on Mn(2+) as a cofactor.

The catalysed reaction is gamma-L-glutamyl-L-cysteine + glycine + ATP = glutathione + ADP + phosphate + H(+). It participates in sulfur metabolism; glutathione biosynthesis; glutathione from L-cysteine and L-glutamate: step 2/2. The chain is Glutathione synthetase from Ralstonia nicotianae (strain ATCC BAA-1114 / GMI1000) (Ralstonia solanacearum).